The following is a 265-amino-acid chain: Undecaprenyl-diphosphatase (265 aa).

The next 8 membrane-spanning stretches (helical) occupy residues 1 to 21 (MDFI…FLPI), 39 to 61 (QGLA…YFRL), 85 to 105 (LAWA…MLTE), 115 to 135 (LIIA…DWAG), 149 to 169 (ILFI…RSGI), 187 to 207 (FSFL…ALDL), 218 to 238 (ALAL…HYFF), and 244 to 264 (IGML…FYLF).

It belongs to the UppP family.

It localises to the cell inner membrane. The enzyme catalyses di-trans,octa-cis-undecaprenyl diphosphate + H2O = di-trans,octa-cis-undecaprenyl phosphate + phosphate + H(+). Its function is as follows. Catalyzes the dephosphorylation of undecaprenyl diphosphate (UPP). Confers resistance to bacitracin. The chain is Undecaprenyl-diphosphatase from Nitrosococcus oceani (strain ATCC 19707 / BCRC 17464 / JCM 30415 / NCIMB 11848 / C-107).